A 652-amino-acid chain; its full sequence is Vacuolar fusion protein MON1 homolog A (652 aa).

Residues 102-141 (MQRKRSSECLDGTLTPSDGQSMERAESPTPGMAQGMEPGA) form a disordered region. S128 and S153 each carry phosphoserine. T158 is modified (phosphothreonine). The interval 158–185 (TESEDGAASGDSHKEGTRGPPPLPTDMR) is disordered. S188 is modified (phosphoserine). The interval 211–245 (PGSSEDWLEPPGAVGRPATEPPREGTTEGDEEDAT) is disordered.

This sequence belongs to the MON1/SAND family. In terms of assembly, interacts with CCZ1. Found in a complex with RMC1, CCZ1, MON1A and MON1B. The MON1A-CCZ1B complex interacts with RIMOC1. The MON1A-CCZ1B complex interacts with RAB7A and this interaction is enhanced in the presence of RIMOC1.

In terms of biological role, plays an important role in membrane trafficking through the secretory apparatus. Not involved in endocytic trafficking to lysosomes. Acts in concert with CCZ1, as a guanine exchange factor (GEF) for RAB7, promotes the exchange of GDP to GTP, converting it from an inactive GDP-bound form into an active GTP-bound form. This chain is Vacuolar fusion protein MON1 homolog A (MON1A), found in Homo sapiens (Human).